The following is a 602-amino-acid chain: SAGA complex subunit SPT8 (602 aa).

The tract at residues 1-141 is disordered; the sequence is MDEVDDILIN…REASSSTHEA (141 aa). 2 stretches are compositionally biased toward acidic residues: residues 14–23 and 36–75; these read VDDEEDDEEM and EGNDDGGEDEEDDDDDDEDDDDDEDEREDDDEQEDDDGED. The residue at position 85 (Thr85) is a Phosphothreonine. Residues Ser108, Ser123, and Ser131 each carry the phosphoserine modification. WD repeat units lie at residues 173–212 and 305–346; these read PIQTHVNALAVSRGLKYLFLGGSDGYIRKYDLLNTLEGKL and GHTQ…NEFK. Residues 366–418 form a disordered region; it reads VSGNVNSGKENENADDDMDSLFGDEDEDEKQDAGNEPVETGDGSNGEENKEQI. Acidic residues predominate over residues 378–395; sequence NADDDMDSLFGDEDEDEK. WD repeat units follow at residues 415 to 454, 506 to 544, and 560 to 600; these read KEQISEESLNIVYDESVFMTSGLNGSVHIWDRRMTQSPAL, SISGPVSCVKAMPNNKHLLCASRDNIRLYNVEIAVDASN, and HHGG…YDID. Position 451 is a phosphoserine (Ser451).

It belongs to the WD repeat SPT8 family. Component of the 1.8 MDa SAGA (Spt-Ada-Gcn5 acetyltransferase) complex, which is composed of 19 subunits TRA1, SPT7, TAF5, NGG1/ADA3, SGF73, SPT20/ADA5, SPT8, TAF12, TAF6, HFI1/ADA1, UBP8, GCN5, ADA2, SPT3, SGF29, TAF10, TAF9, SGF11 and SUS1. The SAGA complex is composed of 4 modules, namely the HAT (histone acetyltransferase) module (GCN5, ADA2, NGG1/ADA3 and SGF29), the DUB (deubiquitinating) module (UBP8, SGF11, SGF73 and SUS1), the core or TAF (TBP-associated factor) module (TAF5, TAF6, TAF9, TAF10 and TAF12), and the Tra1 or SPT (Suppressor of Ty) module (TRA1, HFI1/ADA1, SPT3, SPT7, SPT8 and SPT20/ADA5). The Tra1/SPT module binds activators, the core module recruits TBP (TATA-binding protein), the HAT module contains the histone H3 acetyltransferase GCN5, and the DUB module comprises the histone H2B deubiquitinase UBP8.

The protein localises to the nucleus. In terms of biological role, component of the transcription coactivator SAGA complex. SAGA acts as a general cofactor required for essentially all RNA polymerase II transcription. At the promoters, SAGA is required for transcription pre-initiation complex (PIC) recruitment. It influences RNA polymerase II transcriptional activity through different activities such as TBP interaction (via core/TAF module) and promoter selectivity, interaction with transcription activators (via Tra1/SPT module), and chromatin modification through histone acetylation (via HAT module) and deubiquitination (via DUB module). SAGA preferentially acetylates histones H3 (to form H3K9ac, H3K14ac, H3K18ac and H3K23ac) and H2B and deubiquitinates histone H2B. SAGA interacts with DNA via upstream activating sequences (UASs). During SAGA-mediated transcriptional inhibition, SPT3 and SPT8 prevent binding of TBP to the TATA box. This chain is SAGA complex subunit SPT8 (SPT8), found in Saccharomyces cerevisiae (strain ATCC 204508 / S288c) (Baker's yeast).